Consider the following 461-residue polypeptide: MAPDRLGPEGTARPNSSGISVIVVGLGIAGLTAAIECHRKGHSVIAFERMKDVEPFGEFGFESPYWLLRQPSKGDSIIIGSNGGRIFGKWGRGEVRNAMQAWRYTPTHADIYDTAGRFMAQSEIPKAADDMYFTLRGRLAKTFYEHAQSLGIDMRMGSKVTEFWEDSNRAGIVVEGERFEADCVICADGIHSKSRSLFTSLNAQPFRSGFSIFRGKADANAIIADPDAKWILDQTENTDQFKVFLGKEICVVIITCGLGRAVVCSAMHRDLNEAEQSWSTHANPDDLLDAIKDWPCRRQIEPIVRKISEDQFIDYPLLTVSPLDTWVSQHGRMILIGDAAHPFFPTSGQGGAQAMEDAAVLAICLELAGKGNIPLALHATEKIRKSRASVLQLNRTYSEGVQLAPALPKSKDSMSVPNVPVMDWIWHHCCQSYAYDEFDKVAEAIQSGSEYIPHNLPEDGT.

Residues E48 and R136 each contribute to the FAD site. R214 is a catalytic residue. FAD-binding residues include D338 and G351.

Belongs to the paxM FAD-dependent monooxygenase family. It depends on FAD as a cofactor.

It functions in the pathway secondary metabolite biosynthesis. In terms of biological role, FAD-dependent monooxygenase; part of the gene cluster that mediates the biosynthesis of the indole diterpenes nodulisporic acids (NA). Nodulisporic acid A (NAA) and its chemically modified derivatives are of particular significance because of their highly potent insecticidal activity against blood-feeding arthropods and lack of observable adverse effects on mammals, in particular the tremogenicity associated with the paspaline-derived IDTs is not observed. The geranylgeranyl diphosphate (GGPP) synthase ggs1, localized outside of the cluster, is proposed to catalyze the first step in nodulisporic acid biosynthesis via conversion of farnesyl pyrophosphate and isopentyl pyrophosphate into geranylgeranyl pyrophosphate (GGPP). Condensation of indole-3-glycerol phosphate with GGPP by the prenyl transferase nodC then forms 3-geranylgeranylindole (3-GGI). Epoxidation by the FAD-dependent monooxygenase nodM leads to a single-epoxidized-GGI that is substrate of the terpene cyclase nodB for cyclization to yield emindole SB. The terminal methyl carbon, C28, of emindole SB is then oxidized by the cytochrome P450 monooxygenase nodW to produce nodulisporic acid F (NAF), the pentacyclic core of NAA. NAF is converted to nodulisporic acid E (NAE) via prenylation. This step is probably performed by one of the indole diterpene prenyltransferases nodD1 or nodD2. Several oxidation steps performed by the FAD-linked oxidoreductase nodO and one of the cytochrome P450 monooxygenase nodR, nodX or nodZ further convert NAE to nodulisporic acid D (NAD). NAD is substrate of cytochrome P450 monooxygenase nodJ to produce the precursor of nodulisporic acid C (NAC), converted to NAC by one of the indole diterpene prenyltransferases nodD1 or nodD2. The FAD-dependent monooxygenase nodY2 then oxidizes NAC to nodulisporic acid B (NAB). Finally NAB is converted to NAA by one of the cytochrome P450 monooxygenases nodR, nodX or nodZ. The sequence is that of FAD-dependent monooxygenase nodY2 from Hypoxylon pulicicidum.